We begin with the raw amino-acid sequence, 388 residues long: UPF0496 protein 1 (388 aa).

A disordered region spans residues 1–25 (MGNSSSSGSHRPPRPASSESALPPA). Residues 198–227 (QAVYRQQLTMLEKLQQRKHRLDKKVRAIKA) adopt a coiled-coil conformation. Transmembrane regions (helical) follow at residues 234–254 (IIFA…AAIA) and 257–277 (PVAA…GKWI). Residues 344–376 (VEEIKKKLEVFMKSVEDLGEQADRCSRDIRRAR) are a coiled coil.

It belongs to the UPF0496 family.

It is found in the membrane. This Oryza sativa subsp. japonica (Rice) protein is UPF0496 protein 1.